The chain runs to 736 residues: Polyribonucleotide nucleotidyltransferase (736 aa).

Aspartate 518 and aspartate 524 together coordinate Mg(2+). The 61-residue stretch at 584–644 (PSLQIFSINP…QKVEAAKEHI (61 aa)) folds into the KH domain. One can recognise an S1 motif domain in the interval 665–732 (GEVFKGKVKK…NKNKVELGRA (68 aa)).

It belongs to the polyribonucleotide nucleotidyltransferase family. The cofactor is Mg(2+).

The protein localises to the cytoplasm. It carries out the reaction RNA(n+1) + phosphate = RNA(n) + a ribonucleoside 5'-diphosphate. Its function is as follows. Involved in mRNA degradation. Catalyzes the phosphorolysis of single-stranded polyribonucleotides processively in the 3'- to 5'-direction. The protein is Polyribonucleotide nucleotidyltransferase of Wolinella succinogenes (strain ATCC 29543 / DSM 1740 / CCUG 13145 / JCM 31913 / LMG 7466 / NCTC 11488 / FDC 602W) (Vibrio succinogenes).